The chain runs to 116 residues: Beta-2-microglobulin (116 aa).

Residues 1 to 19 (MRAIITFALFCVLYITVQA) form the signal peptide. In terms of domain architecture, Ig-like C1-type spans 24 to 111 (PKVQVYSHFP…RHMSNTNAYS (88 aa)). A disulfide bridge links Cys-44 with Cys-99.

It belongs to the beta-2-microglobulin family. In terms of assembly, heterodimer of an alpha chain and a beta chain. Beta-2-microglobulin is the beta-chain of major histocompatibility complex class I molecules.

The protein resides in the secreted. Component of the class I major histocompatibility complex (MHC). Involved in the presentation of peptide antigens to the immune system. In Labeobarbus intermedius (Lake tana barbels), this protein is Beta-2-microglobulin (b2m).